The sequence spans 277 residues: Formamidopyrimidine-DNA glycosylase (277 aa).

Proline 2 serves as the catalytic Schiff-base intermediate with DNA. The active-site Proton donor is the glutamate 3. The Proton donor; for beta-elimination activity role is filled by lysine 60. Residues histidine 94, arginine 113, and arginine 156 each coordinate DNA. The FPG-type zinc finger occupies 241-275 (KVYNREGLPCPHCGKPIQRIKVAGRSSYYCSSCQK). Catalysis depends on arginine 265, which acts as the Proton donor; for delta-elimination activity.

Belongs to the FPG family. In terms of assembly, monomer. Zn(2+) serves as cofactor.

It carries out the reaction Hydrolysis of DNA containing ring-opened 7-methylguanine residues, releasing 2,6-diamino-4-hydroxy-5-(N-methyl)formamidopyrimidine.. It catalyses the reaction 2'-deoxyribonucleotide-(2'-deoxyribose 5'-phosphate)-2'-deoxyribonucleotide-DNA = a 3'-end 2'-deoxyribonucleotide-(2,3-dehydro-2,3-deoxyribose 5'-phosphate)-DNA + a 5'-end 5'-phospho-2'-deoxyribonucleoside-DNA + H(+). In terms of biological role, involved in base excision repair of DNA damaged by oxidation or by mutagenic agents. Acts as a DNA glycosylase that recognizes and removes damaged bases. Has a preference for oxidized purines, such as 7,8-dihydro-8-oxoguanine (8-oxoG). Has AP (apurinic/apyrimidinic) lyase activity and introduces nicks in the DNA strand. Cleaves the DNA backbone by beta-delta elimination to generate a single-strand break at the site of the removed base with both 3'- and 5'-phosphates. The protein is Formamidopyrimidine-DNA glycosylase of Desulforamulus reducens (strain ATCC BAA-1160 / DSM 100696 / MI-1) (Desulfotomaculum reducens).